Reading from the N-terminus, the 187-residue chain is Large ribosomal subunit protein uL18 (187 aa).

It belongs to the universal ribosomal protein uL18 family. In terms of assembly, part of the 50S ribosomal subunit. Interacts with proteins L5 and L21e, and attaches the 5S rRNA to the 23S rRNA. Has been cross-linked to L21e.

In terms of biological role, this is one of 5 proteins that mediate the attachment of the 5S rRNA onto the large ribosomal subunit, where it forms part of the central protuberance and stabilizes the orientation of adjacent RNA domains. In Haloarcula marismortui (strain ATCC 43049 / DSM 3752 / JCM 8966 / VKM B-1809) (Halobacterium marismortui), this protein is Large ribosomal subunit protein uL18 (rpl18).